We begin with the raw amino-acid sequence, 1102 residues long: PAN2-PAN3 deadenylation complex catalytic subunit PAN2 (1102 aa).

WD repeat units follow at residues 20-59 (DYPRPATALAFDTIAELLWAGNDRGRVVSFYGRDLQRYTA), 104-144 (DEME…IVKQ), and 269-308 (NVMSFINLFEIAPSGEALAMADTECNIHLWGSPSKIHFTD). A linker region spans residues 308 to 445 (DMAIPIEMPK…STDELESLKP (138 aa)). The interval 423-442 (AVPDPKVEQVPESSTDELES) is disordered. Residues 446 to 833 (EAPPIYRNLE…LPAVLLFQVK (388 aa)) enclose the USP domain. The 174-residue stretch at 881 to 1054 (VGLDTEFVSL…EDARTALKLY (174 aa)) folds into the Exonuclease domain. Residues Asp884, Glu886, Asp993, and Asp1046 each coordinate a divalent metal cation.

This sequence belongs to the peptidase C19 family. PAN2 subfamily. Forms a heterotrimer with an asymmetric homodimer of the regulatory subunit PAN3 to form the poly(A)-nuclease (PAN) deadenylation complex. It depends on a divalent metal cation as a cofactor.

The protein localises to the cytoplasm. It catalyses the reaction Exonucleolytic cleavage of poly(A) to 5'-AMP.. Positively regulated by the regulatory subunit PAN3. Its function is as follows. Catalytic subunit of the poly(A)-nuclease (PAN) deadenylation complex, one of two cytoplasmic mRNA deadenylases involved in mRNA turnover. PAN specifically shortens poly(A) tails of RNA and the activity is stimulated by poly(A)-binding protein PAB1. PAN deadenylation is followed by rapid degradation of the shortened mRNA tails by the CCR4-NOT complex. Deadenylated mRNAs are then degraded by two alternative mechanisms, namely exosome-mediated 3'-5' exonucleolytic degradation, or deadenylation-dependent mRNA decaping and subsequent 5'-3' exonucleolytic degradation by XRN1. May also be involved in post-transcriptional maturation of mRNA poly(A) tails. In Chaetomium globosum (strain ATCC 6205 / CBS 148.51 / DSM 1962 / NBRC 6347 / NRRL 1970) (Soil fungus), this protein is PAN2-PAN3 deadenylation complex catalytic subunit PAN2.